The following is a 401-amino-acid chain: Imidazolonepropionase (401 aa).

Fe(3+) is bound by residues His-70 and His-72. Residues His-70 and His-72 each coordinate Zn(2+). Positions 79, 142, and 175 each coordinate 4-imidazolone-5-propanoate. Residue Tyr-142 participates in N-formimidoyl-L-glutamate binding. His-238 serves as a coordination point for Fe(3+). His-238 is a binding site for Zn(2+). Gln-241 provides a ligand contact to 4-imidazolone-5-propanoate. Position 313 (Asp-313) interacts with Fe(3+). Asp-313 lines the Zn(2+) pocket. N-formimidoyl-L-glutamate is bound by residues Asn-315 and Gly-317. Thr-318 contributes to the 4-imidazolone-5-propanoate binding site.

It belongs to the metallo-dependent hydrolases superfamily. HutI family. Zn(2+) serves as cofactor. Fe(3+) is required as a cofactor.

Its subcellular location is the cytoplasm. The enzyme catalyses 4-imidazolone-5-propanoate + H2O = N-formimidoyl-L-glutamate. The protein operates within amino-acid degradation; L-histidine degradation into L-glutamate; N-formimidoyl-L-glutamate from L-histidine: step 3/3. In terms of biological role, catalyzes the hydrolytic cleavage of the carbon-nitrogen bond in imidazolone-5-propanoate to yield N-formimidoyl-L-glutamate. It is the third step in the universal histidine degradation pathway. This is Imidazolonepropionase from Xanthomonas campestris pv. campestris (strain 8004).